We begin with the raw amino-acid sequence, 588 residues long: MKSTQTPSGMPIHKYRPFHEQITVDLRDRTWPARRITEAPRWCAVDLRDGNQALIDPMSPERKRIMFNLLVRMGYKEIEVGFPSASQTDFDFVRSLIEEGAIPDDVTIQVLTQAREHLIARTYESIRGAKQAIVHLYNSTSVLQREVVFRTDRQGIIDIALEGARLCKRYEETIPETDVYYEYSPESYTGTELEFAAEICNRVVEVFDPTPERKVILNLPATVEMATPNVYADSIEWMCRHLDRRDEILVSLHPHNDRGTAVAAAELGYLAGADRIEGCLFGNGERTGNVDLVALGINLFTQGIDPQIDFSDLDGIKRTAEHCNQLAVPERSPWAGDLVYTAFSGSHQDAIKKGFEAMAVDAAAQGVTVDDIPWAVPYLPVDPQDLGRSYEAVIRVNSQSGKGGVAYLLKADHSLDLPRRLQIEFSGVVQAKTDAEGGEVTSAQIWSVFQDEYLPAPLDRVEEKWGRFELTSTRTSSDMGGSVSLDVVLRDGDEVREASASGNGPIAAFLQVLADQGVEVRLLDYVEHALSASGDALAASYVELEVEGVRLWGVGIDEDSSTASLEAIVSGVNRAIRRTVREPELAAV.

In terms of domain architecture, Pyruvate carboxyltransferase spans 40–314; the sequence is PRWCAVDLRD…DPQIDFSDLD (275 aa). The Mg(2+) site is built by Asp49, His253, His255, and Asn289. A regulatory domain region spans residues 456–588; the sequence is APLDRVEEKW…TVREPELAAV (133 aa).

Belongs to the alpha-IPM synthase/homocitrate synthase family. LeuA type 2 subfamily. In terms of assembly, homodimer. Mg(2+) is required as a cofactor.

It localises to the cytoplasm. The enzyme catalyses 3-methyl-2-oxobutanoate + acetyl-CoA + H2O = (2S)-2-isopropylmalate + CoA + H(+). It functions in the pathway amino-acid biosynthesis; L-leucine biosynthesis; L-leucine from 3-methyl-2-oxobutanoate: step 1/4. Catalyzes the condensation of the acetyl group of acetyl-CoA with 3-methyl-2-oxobutanoate (2-ketoisovalerate) to form 3-carboxy-3-hydroxy-4-methylpentanoate (2-isopropylmalate). The sequence is that of 2-isopropylmalate synthase from Clavibacter sepedonicus (Clavibacter michiganensis subsp. sepedonicus).